A 437-amino-acid polypeptide reads, in one-letter code: Serine hydroxymethyltransferase 2 (437 aa).

Residues Leu125 and 129 to 131 (GHL) each bind (6S)-5,6,7,8-tetrahydrofolate. Residue Lys234 is modified to N6-(pyridoxal phosphate)lysine.

The protein belongs to the SHMT family. As to quaternary structure, homodimer. Pyridoxal 5'-phosphate serves as cofactor.

Its subcellular location is the cytoplasm. The enzyme catalyses (6R)-5,10-methylene-5,6,7,8-tetrahydrofolate + glycine + H2O = (6S)-5,6,7,8-tetrahydrofolate + L-serine. The protein operates within one-carbon metabolism; tetrahydrofolate interconversion. It functions in the pathway amino-acid biosynthesis; glycine biosynthesis; glycine from L-serine: step 1/1. Catalyzes the reversible interconversion of serine and glycine with tetrahydrofolate (THF) serving as the one-carbon carrier. This reaction serves as the major source of one-carbon groups required for the biosynthesis of purines, thymidylate, methionine, and other important biomolecules. Also exhibits THF-independent aldolase activity toward beta-hydroxyamino acids, producing glycine and aldehydes, via a retro-aldol mechanism. This is Serine hydroxymethyltransferase 2 from Mesorhizobium japonicum (strain LMG 29417 / CECT 9101 / MAFF 303099) (Mesorhizobium loti (strain MAFF 303099)).